Here is a 250-residue protein sequence, read N- to C-terminus: 5-oxoprolinase subunit A (250 aa).

It belongs to the LamB/PxpA family. As to quaternary structure, forms a complex composed of PxpA, PxpB and PxpC.

It catalyses the reaction 5-oxo-L-proline + ATP + 2 H2O = L-glutamate + ADP + phosphate + H(+). Catalyzes the cleavage of 5-oxoproline to form L-glutamate coupled to the hydrolysis of ATP to ADP and inorganic phosphate. In Paraburkholderia phytofirmans (strain DSM 17436 / LMG 22146 / PsJN) (Burkholderia phytofirmans), this protein is 5-oxoprolinase subunit A.